A 101-amino-acid polypeptide reads, in one-letter code: NAD(P)H-quinone oxidoreductase subunit 4L, chloroplastic (101 aa).

The next 3 membrane-spanning stretches (helical) occupy residues 2–22 (MFEH…YGLI), 32–52 (ICLE…SDLF), and 61–81 (IFAI…LSIL).

This sequence belongs to the complex I subunit 4L family. In terms of assembly, NDH is composed of at least 16 different subunits, 5 of which are encoded in the nucleus.

It is found in the plastid. The protein localises to the chloroplast thylakoid membrane. The enzyme catalyses a plastoquinone + NADH + (n+1) H(+)(in) = a plastoquinol + NAD(+) + n H(+)(out). It carries out the reaction a plastoquinone + NADPH + (n+1) H(+)(in) = a plastoquinol + NADP(+) + n H(+)(out). NDH shuttles electrons from NAD(P)H:plastoquinone, via FMN and iron-sulfur (Fe-S) centers, to quinones in the photosynthetic chain and possibly in a chloroplast respiratory chain. The immediate electron acceptor for the enzyme in this species is believed to be plastoquinone. Couples the redox reaction to proton translocation, and thus conserves the redox energy in a proton gradient. The protein is NAD(P)H-quinone oxidoreductase subunit 4L, chloroplastic of Oryza nivara (Indian wild rice).